A 221-amino-acid chain; its full sequence is Large ribosomal subunit protein bL25 (221 aa).

The tract at residues 192-221 (APRVEKEETEEDTVAPGDVPAENSKDADEE) is disordered.

This sequence belongs to the bacterial ribosomal protein bL25 family. CTC subfamily. As to quaternary structure, part of the 50S ribosomal subunit; part of the 5S rRNA/L5/L18/L25 subcomplex. Contacts the 5S rRNA. Binds to the 5S rRNA independently of L5 and L18.

This is one of the proteins that binds to the 5S RNA in the ribosome where it forms part of the central protuberance. This chain is Large ribosomal subunit protein bL25, found in Idiomarina loihiensis (strain ATCC BAA-735 / DSM 15497 / L2-TR).